A 675-amino-acid polypeptide reads, in one-letter code: G-protein coupled receptor moody (675 aa).

The Extracellular segment spans residues 1 to 44; the sequence is MSDETTGSLGDAFSPMDTPTTTIMPPPADVDESGFSHSLLTFAA. Residues 45–65 form a helical membrane-spanning segment; it reads VMTFLIMIVGICGNLLTVVAL. At 66–73 the chain is on the cytoplasmic side; the sequence is LKCPKVRN. A helical membrane pass occupies residues 74–94; it reads VAAAFIISLCIADLLFCALVL. Residues 95–115 are Extracellular-facing; the sequence is PFQGLRFVQGTWRHGEVLCRL. The cysteines at positions 113 and 192 are disulfide-linked. Residues 116–136 traverse the membrane as a helical segment; sequence IPFIQYGNIGVSLLCIAMITI. Residues 137–156 lie on the Cytoplasmic side of the membrane; that stretch reads NRYVMITHYSLYNRIYKRHW. A helical membrane pass occupies residues 157–177; that stretch reads IAIMIAACWLFSYGMQLPTLL. The Extracellular portion of the chain corresponds to 178 to 206; it reads GAWGRFGYDARLQTCSIMSDRHGHSSKTT. A helical transmembrane segment spans residues 207–227; the sequence is LFITAFVIPCLVIIACYAKIF. The Cytoplasmic portion of the chain corresponds to 228–327; that stretch reads WVVHKSEQRL…AKRNEWRITK (100 aa). The interval 258-316 is disordered; that stretch reads TSMPSGDGANPSQVPAGCRVSSDSSSNYSTDVPDTTPGGAGGGAGVKQQPSRVKDQREV. Positions 278 to 294 are enriched in low complexity; it reads SSDSSSNYSTDVPDTTP. A helical transmembrane segment spans residues 328 to 348; the sequence is MVLAIFLSFVICYLPITIVKV. The Extracellular portion of the chain corresponds to 349–359; sequence ADKDVEHPSLH. The chain crosses the membrane as a helical span at residues 360-380; it reads IFSYIMLYLSACINPIIYVIM. Residues 381–675 are Cytoplasmic-facing; that stretch reads NKQYRKAYKT…LMDKKKFPKD (295 aa). 2 disordered regions span residues 475–568 and 588–675; these read SKSS…GNGS and LPPT…FPKD. The span at 536 to 551 shows a compositional bias: low complexity; the sequence is SSVISANPSSSPSPSS. The segment covering 552 to 565 has biased composition (gly residues); the sequence is SGGGIYRPGIGSMG. The span at 666 to 675 shows a compositional bias: basic and acidic residues; it reads LMDKKKFPKD.

This sequence belongs to the G-protein coupled receptor 1 family.

Its subcellular location is the cell membrane. Functionally, required in glia to regulate the acute sensitivity to cocaine and to continuously maintain the proper blood-brain barrier (BBB) function. A moody-mediated signaling pathway functions in glia to regulate nervous system insulation and drug-related behaviors. The polypeptide is G-protein coupled receptor moody (Drosophila pseudoobscura pseudoobscura (Fruit fly)).